The chain runs to 724 residues: MEHNKAGSSGQCPVMHGGLTSASMSNMDWWPKALNLDILHQHDSKTNPLGADFNYREELKKLDVEALKRDLKALMTNSQEWWPADWGHYGGLMIRMAWHSAGTYRIADGRGGGGTGNQRFAPLNSWPDNANLDKARRLLWPIKQKYGNKISWADLMILAGNMAYESMGLKTFGFAFGREDIWHPEKDIYWGSEKEWLAKSGGENSRYSGQRDLENPLATVMMGLIYVNPEGVDGNPDPLKTAQDMRVTFARMAMNDEETVALTAGGHTVGKAHGNGKASNLGPDPEGAELHEQGLGWNNHTSRGIGRNTVTSGIEGAWTTHPTRWDNEYFYLLLSYEWQLTKSPAGAWQWEPVNIKEEDKPVDVEDPSIRYNPMMTDADMALKIDPEYRKISERFYKDPAYFSEVFARAWFKLTHRDMGPKARYFGPDVPAEDLIWQDPVPAGRKDYDVNAVKAKIAASGLSISEMVSTAWDSARTFRGSDKRGGANGARIRLAPQKDWEGNEPARLGKVLAVLEKIAAESGISIADTIVLAGNVGIEQAAKAAGVNVTVPFAPGRGDATIEQTDVESFEVLEPLADGFRNWQKKHYVVTPEEMLLDKAQLLRLTAPEMTVLIGGMRVLGTNYGGSQHGVFTDRVGALTNDFFVNLTDMSYTWKPTGRNSYEIVERKSGKVKWTATRVDLVFGSNSILRAYAEVYAQDDNKEKFVKDFVAAWTKVMNADRFDLV.

Residues 98–226 constitute a cross-link (tryptophyl-tyrosyl-methioninium (Trp-Tyr) (with M-252)); that stretch reads WHSAGTYRIA…LATVMMGLIY (129 aa). The active-site Proton acceptor is histidine 99. Positions 226 to 252 form a cross-link, tryptophyl-tyrosyl-methioninium (Tyr-Met) (with W-98); it reads YVNPEGVDGNPDPLKTAQDMRVTFARM. Histidine 267 is a binding site for heme b.

Belongs to the peroxidase family. Peroxidase/catalase subfamily. Homodimer or homotetramer. Heme b serves as cofactor. Formation of the three residue Trp-Tyr-Met cross-link is important for the catalase, but not the peroxidase activity of the enzyme.

The catalysed reaction is H2O2 + AH2 = A + 2 H2O. It carries out the reaction 2 H2O2 = O2 + 2 H2O. In terms of biological role, bifunctional enzyme with both catalase and broad-spectrum peroxidase activity. This is Catalase-peroxidase from Vibrio cholerae serotype O1 (strain ATCC 39541 / Classical Ogawa 395 / O395).